The chain runs to 222 residues: Uracil-DNA glycosylase (222 aa).

Residue D66 is the Proton acceptor of the active site.

The protein belongs to the uracil-DNA glycosylase (UDG) superfamily. UNG family.

Its subcellular location is the cytoplasm. The catalysed reaction is Hydrolyzes single-stranded DNA or mismatched double-stranded DNA and polynucleotides, releasing free uracil.. In terms of biological role, excises uracil residues from the DNA which can arise as a result of misincorporation of dUMP residues by DNA polymerase or due to deamination of cytosine. This Porphyromonas gingivalis (strain ATCC BAA-308 / W83) protein is Uracil-DNA glycosylase.